The chain runs to 208 residues: Large ribosomal subunit protein uL4 (208 aa).

Positions 44–79 are disordered; it reads QRQGTHKSKERSEISGSTRKIGRQKGGGGARRGDMN.

This sequence belongs to the universal ribosomal protein uL4 family. In terms of assembly, part of the 50S ribosomal subunit.

One of the primary rRNA binding proteins, this protein initially binds near the 5'-end of the 23S rRNA. It is important during the early stages of 50S assembly. It makes multiple contacts with different domains of the 23S rRNA in the assembled 50S subunit and ribosome. Functionally, forms part of the polypeptide exit tunnel. The chain is Large ribosomal subunit protein uL4 from Bacteroides fragilis (strain YCH46).